A 119-amino-acid polypeptide reads, in one-letter code: Beta-2-microglobulin (119 aa).

An N-terminal signal peptide occupies residues 1–20 (MSPSVALAVLALLSLSGLEA). Residues 25–114 (PKIQVYSRHP…VTLSGPRTVK (90 aa)) form the Ig-like C1-type domain. The cysteines at positions 45 and 100 are disulfide-linked.

It belongs to the beta-2-microglobulin family. In terms of assembly, heterodimer of an alpha chain and a beta chain. Beta-2-microglobulin is the beta-chain of major histocompatibility complex class I molecules.

The protein localises to the secreted. Component of the class I major histocompatibility complex (MHC). Involved in the presentation of peptide antigens to the immune system. The sequence is that of Beta-2-microglobulin (B2M) from Macaca fascicularis (Crab-eating macaque).